Here is a 182-residue protein sequence, read N- to C-terminus: Hypoxanthine/guanine phosphoribosyltransferase (182 aa).

This sequence belongs to the purine/pyrimidine phosphoribosyltransferase family. Archaeal HPRT subfamily. Homodimer.

The protein resides in the cytoplasm. The catalysed reaction is IMP + diphosphate = hypoxanthine + 5-phospho-alpha-D-ribose 1-diphosphate. It carries out the reaction GMP + diphosphate = guanine + 5-phospho-alpha-D-ribose 1-diphosphate. It participates in purine metabolism; IMP biosynthesis via salvage pathway; IMP from hypoxanthine: step 1/1. Catalyzes a salvage reaction resulting in the formation of IMP that is energically less costly than de novo synthesis. This Methanospirillum hungatei JF-1 (strain ATCC 27890 / DSM 864 / NBRC 100397 / JF-1) protein is Hypoxanthine/guanine phosphoribosyltransferase.